The following is a 279-amino-acid chain: NAD kinase (279 aa).

Catalysis depends on Asp-57, which acts as the Proton acceptor. NAD(+) contacts are provided by residues 57–58, 133–134, Arg-159, Asp-161, 172–177, and Ala-196; these read DG, NE, and TAYNKS.

It belongs to the NAD kinase family. A divalent metal cation is required as a cofactor.

The protein resides in the cytoplasm. The catalysed reaction is NAD(+) + ATP = ADP + NADP(+) + H(+). In terms of biological role, involved in the regulation of the intracellular balance of NAD and NADP, and is a key enzyme in the biosynthesis of NADP. Catalyzes specifically the phosphorylation on 2'-hydroxyl of the adenosine moiety of NAD to yield NADP. The polypeptide is NAD kinase (Streptococcus thermophilus (strain CNRZ 1066)).